The primary structure comprises 141 residues: Actin-depolymerizing factor 9 (141 aa).

Residue serine 8 is modified to Phosphoserine. The ADF-H domain maps to serine 8–lysine 141.

Belongs to the actin-binding proteins ADF family.

The protein localises to the cytoplasm. It localises to the cytoskeleton. Does not display typical F-actin depolymerizing activity. Exhibits a high ability to stabilize and cross-link actin filaments. Functions as an actin bundling protein with the highest efficiency under acidic conditions. May play a role in the modulation of levels of histone H3 lysine 4 trimethylation and H3 lysine 9 and 14 acetylation at the FLC locus. The polypeptide is Actin-depolymerizing factor 9 (ADF9) (Arabidopsis thaliana (Mouse-ear cress)).